Reading from the N-terminus, the 72-residue chain is Putative sodium channel toxin Ts18 (72 aa).

Residues 1–21 (MNFRFPFLLMITISLIGAVLT) form the signal peptide. 3 disulfides stabilise this stretch: Cys38-Cys61, Cys47-Cys66, and Cys51-Cys68.

It belongs to the long (3 C-C) scorpion toxin superfamily. In terms of tissue distribution, expressed by the venom gland.

It is found in the secreted. Functionally, binds to sodium channels (Nav) and affects the channel activation process. This is Putative sodium channel toxin Ts18 from Tityus serrulatus (Brazilian scorpion).